A 447-amino-acid polypeptide reads, in one-letter code: MTNPLQVSELVQYVKRELENDSLLQQVQVVGEVSNFKRHSSGHLYFTLKDEQSRMKAVMFARDASRVKTDIRDGARVIITARISVYVASGEMQLYVERMMEDGVGALYEAYVQLKEDVEARGWFEAEQKLPLPAFPQKIGIVTSPKGAALHDIATTLRRRYPQAAIVFAPVLVQGKEAAPQIVRAIEWMNEHQACDVMIIGRGGGSIEELWAFNEMPVVTAIHQSRIPIVSAVGHETDFTIADFVADVRAATPTAAAELVTPEAAELAKRLNELNRRLTRHYAQYITERKDQVQRLATSYGLKSPRVLLGLKQERLDRAEMGLNRIGKQVLQSKQQALTDQVNRFARIAMQERLAEQGRQLVRTRKQLERIHTVLRTKQDRLHQMIARLDSVSPTQVMLRGYTYVEQDGRLVRSVTELSDQTFRVQFHDGSILAKREDEEDGNRTIL.

Belongs to the XseA family. Heterooligomer composed of large and small subunits.

Its subcellular location is the cytoplasm. The catalysed reaction is Exonucleolytic cleavage in either 5'- to 3'- or 3'- to 5'-direction to yield nucleoside 5'-phosphates.. Its function is as follows. Bidirectionally degrades single-stranded DNA into large acid-insoluble oligonucleotides, which are then degraded further into small acid-soluble oligonucleotides. This chain is Exodeoxyribonuclease 7 large subunit, found in Exiguobacterium sibiricum (strain DSM 17290 / CCUG 55495 / CIP 109462 / JCM 13490 / 255-15).